Reading from the N-terminus, the 88-residue chain is Small ribosomal subunit protein bS20 (88 aa).

Residues 1 to 23 are disordered; that stretch reads MANTSSAKKATRKIARRAAINKN.

Belongs to the bacterial ribosomal protein bS20 family.

Binds directly to 16S ribosomal RNA. This Mesorhizobium japonicum (strain LMG 29417 / CECT 9101 / MAFF 303099) (Mesorhizobium loti (strain MAFF 303099)) protein is Small ribosomal subunit protein bS20.